A 599-amino-acid chain; its full sequence is Glycerophosphodiester phosphodiesterase domain-containing protein 5 (599 aa).

Residues 1–42 are Cytoplasmic-facing; the sequence is MVKHQPLQYYEPQLCLSCLTGIYGCRWKRYQRSHDDTTKWER. Intrachain disulfides connect C15/C18 and C25/C576. The chain crosses the membrane as a helical span at residues 43–63; sequence LWFLILTSSFFLTLVWFYFWW. Over 64–87 the chain is Extracellular; that stretch reads EVHNDYNEINWFLYNRMGYWSDWS. A helical transmembrane segment spans residues 88-108; that stretch reads IPILVTTAAGFTYITVLLILA. The Cytoplasmic segment spans residues 109–125; that stretch reads LCHIAVGQQMNLHWLHK. The chain crosses the membrane as a helical span at residues 126 to 146; that stretch reads IGLMTTLITTVVTMSSIAQLW. The Extracellular portion of the chain corresponds to 147–160; it reads DDEWEMVFISLQAT. A helical transmembrane segment spans residues 161–181; sequence APFLHIGALAAVTALSWLIAG. The Cytoplasmic segment spans residues 182–192; that stretch reads QFARMEKATSQ. Residues 193 to 213 form a helical membrane-spanning segment; that stretch reads MLMVTAYLAVVVALYLVPLTI. The Extracellular segment spans residues 214–497; it reads SSPCIMEKKA…IWLMPPDEYR (284 aa). Positions 228–485 constitute a GP-PDE domain; that stretch reads PAIIGHRGAP…DSSHVLRKVP (258 aa). N-linked (GlcNAc...) asparagine glycosylation is found at N301, N336, N352, N374, and N448. Residues 498–518 form a helical membrane-spanning segment; sequence LIWITSDLISFIIIVGVFIFQ. Over 519–599 the chain is Cytoplasmic; it reads NYHNDQWRLG…DHRDTRLRMN (81 aa).

It belongs to the glycerophosphoryl diester phosphodiesterase family. In terms of assembly, interacts with PRDX1; forms a mixed-disulfide with PRDX1, leading to disrupt intramolecular disulfide bond between Cys-25 and Cys-576. Intramolecular disulfide bond between Cys-25 and Cys-576 is reduced by PRDX1. Detected in mature motor neurons.

It is found in the endomembrane system. The protein localises to the cytoplasm. The protein resides in the perinuclear region. It localises to the cell projection. Its subcellular location is the growth cone. The catalysed reaction is a 1,2-diacyl-sn-glycero-3-phospho-(1D-myo-inositol-4,5-bisphosphate) + H2O = 1D-myo-inositol 1,4,5-trisphosphate + a 1,2-diacyl-sn-glycerol + H(+). It carries out the reaction sn-glycerol 3-phosphocholine + H2O = sn-glycerol 3-phosphate + choline + H(+). Activated by PRDX1 by reduction of an intramolecular disulfide bond. Glycerophosphodiester phosphodiesterase that promotes cell cycle exit and drives spinal motor neuron differentiation. Mediates the cleavage of glycosylphosphatidylinositol (GPI) anchor of target proteins: removes the GPI-anchor of RECK, leading to release RECK from the plasma membrane. May contribute to the osmotic regulation of cellular glycerophosphocholine. The sequence is that of Glycerophosphodiester phosphodiesterase domain-containing protein 5 (GDPD5) from Gallus gallus (Chicken).